An 881-amino-acid polypeptide reads, in one-letter code: Fanconi anemia core complex-associated protein 100 (881 aa).

Positions 94–119 are disordered; it reads GRSRSTSQDDRDSEDGDQPSPVIPVD. A Phosphoserine modification is found at Ser-667.

In terms of assembly, belongs to the multisubunit FA complex composed of FANCA, FANCB, FANCC, FANCE, FANCF, FANCG, FANCL/PHF9, FANCM, FAAP24 and FAAP100. Forms a subcomplex with FANCB and FANCL.

The protein localises to the nucleus. Plays a role in Fanconi anemia-associated DNA damage response network. Regulates FANCD2 monoubiquitination and the stability of the FA core complex. Induces chromosomal instability as well as hypersensitivity to DNA cross-linking agents, when repressed. This chain is Fanconi anemia core complex-associated protein 100, found in Homo sapiens (Human).